Consider the following 884-residue polypeptide: DNA mismatch repair protein MutS (884 aa).

Glycine 643–serine 650 is a binding site for ATP.

It belongs to the DNA mismatch repair MutS family.

Functionally, this protein is involved in the repair of mismatches in DNA. It is possible that it carries out the mismatch recognition step. This protein has a weak ATPase activity. The sequence is that of DNA mismatch repair protein MutS from Methylobacillus flagellatus (strain ATCC 51484 / DSM 6875 / VKM B-1610 / KT).